The chain runs to 238 residues: Pyridoxine 5'-phosphate synthase (238 aa).

Asn7 lines the 3-amino-2-oxopropyl phosphate pocket. Asp9–His10 is a binding site for 1-deoxy-D-xylulose 5-phosphate. Arg18 provides a ligand contact to 3-amino-2-oxopropyl phosphate. His43 acts as the Proton acceptor in catalysis. Arg45 and His50 together coordinate 1-deoxy-D-xylulose 5-phosphate. Residue Glu70 is the Proton acceptor of the active site. Thr100 lines the 1-deoxy-D-xylulose 5-phosphate pocket. Residue His190 is the Proton donor of the active site. 3-amino-2-oxopropyl phosphate-binding positions include Gly191 and Gly212–His213.

This sequence belongs to the PNP synthase family. Homooctamer; tetramer of dimers.

It localises to the cytoplasm. It carries out the reaction 3-amino-2-oxopropyl phosphate + 1-deoxy-D-xylulose 5-phosphate = pyridoxine 5'-phosphate + phosphate + 2 H2O + H(+). The protein operates within cofactor biosynthesis; pyridoxine 5'-phosphate biosynthesis; pyridoxine 5'-phosphate from D-erythrose 4-phosphate: step 5/5. Its function is as follows. Catalyzes the complicated ring closure reaction between the two acyclic compounds 1-deoxy-D-xylulose-5-phosphate (DXP) and 3-amino-2-oxopropyl phosphate (1-amino-acetone-3-phosphate or AAP) to form pyridoxine 5'-phosphate (PNP) and inorganic phosphate. The chain is Pyridoxine 5'-phosphate synthase from Prochlorococcus marinus (strain AS9601).